Reading from the N-terminus, the 957-residue chain is Glycine dehydrogenase (decarboxylating) 2 (957 aa).

Lysine 707 bears the N6-(pyridoxal phosphate)lysine mark.

The protein belongs to the GcvP family. As to quaternary structure, the glycine cleavage system is composed of four proteins: P, T, L and H. It depends on pyridoxal 5'-phosphate as a cofactor.

The enzyme catalyses N(6)-[(R)-lipoyl]-L-lysyl-[glycine-cleavage complex H protein] + glycine + H(+) = N(6)-[(R)-S(8)-aminomethyldihydrolipoyl]-L-lysyl-[glycine-cleavage complex H protein] + CO2. Functionally, the glycine cleavage system catalyzes the degradation of glycine. The P protein binds the alpha-amino group of glycine through its pyridoxal phosphate cofactor; CO(2) is released and the remaining methylamine moiety is then transferred to the lipoamide cofactor of the H protein. The polypeptide is Glycine dehydrogenase (decarboxylating) 2 (gcvP2) (Pseudomonas putida (strain ATCC 47054 / DSM 6125 / CFBP 8728 / NCIMB 11950 / KT2440)).